The sequence spans 407 residues: RNA-binding motif, single-stranded-interacting protein 2 (407 aa).

An N-acetylmethionine modification is found at M1. Residues 29-54 are disordered; sequence QQMAPPSPSNSTPNSSSGSNGNDQLS. The span at 37–50 shows a compositional bias: low complexity; it reads SNSTPNSSSGSNGN. 2 consecutive RRM domains span residues 56 to 129 and 135 to 220; these read TNLY…MAKQ and TNLY…FADG. The residue at position 106 (S106) is a Phosphoserine. T269 bears the Phosphothreonine mark. 2 positions are modified to phosphoserine: S280 and S285.

Its subcellular location is the nucleus. This Homo sapiens (Human) protein is RNA-binding motif, single-stranded-interacting protein 2 (RBMS2).